The sequence spans 447 residues: N-succinylarginine dihydrolase (447 aa).

Substrate-binding positions include 19–28, Asn110, and 137–138; these read AGLSFGNEAS and HR. Residue Glu174 is part of the active site. Arg212 is a substrate binding site. His248 is an active-site residue. Substrate contacts are provided by Asp250 and Asn359. The active-site Nucleophile is the Cys365.

Belongs to the succinylarginine dihydrolase family. Homodimer.

It carries out the reaction N(2)-succinyl-L-arginine + 2 H2O + 2 H(+) = N(2)-succinyl-L-ornithine + 2 NH4(+) + CO2. Its pathway is amino-acid degradation; L-arginine degradation via AST pathway; L-glutamate and succinate from L-arginine: step 2/5. Its function is as follows. Catalyzes the hydrolysis of N(2)-succinylarginine into N(2)-succinylornithine, ammonia and CO(2). This chain is N-succinylarginine dihydrolase, found in Salmonella dublin (strain CT_02021853).